Here is a 125-residue protein sequence, read N- to C-terminus: MITPTDKKSITDYGSPEQFLSQVNYLLGKQAYVGETASEGGFDANAVATANILETSTQEIGGKEYYYLSVLTRTADGDEGGKHQLITATVNGGKLYICKAQAGDKRWFKGARKFVENAATSFSVA.

Position 15 is a phosphoserine (serine 15).

It belongs to the PsbP family.

In Arabidopsis thaliana (Mouse-ear cress), this protein is Putative oxygen-evolving enhancer protein 2-2 (PSBP2).